A 358-amino-acid polypeptide reads, in one-letter code: 2-oxoisovalerate dehydrogenase subunit beta 2, mitochondrial (358 aa).

The N-terminal 16 residues, 1–16 (MAAALVRRFCRGSSFP), are a transit peptide targeting the mitochondrion. Y119 lines the thiamine diphosphate pocket. K(+) contacts are provided by G145, L147, T148, D198, and N200.

As to quaternary structure, heterotetramer of alpha and beta chains. Requires thiamine diphosphate as cofactor. Expressed in the non-photosynthetic organs such as siliques, flowers and roots.

Its subcellular location is the mitochondrion matrix. It catalyses the reaction N(6)-[(R)-lipoyl]-L-lysyl-[protein] + 3-methyl-2-oxobutanoate + H(+) = N(6)-[(R)-S(8)-2-methylpropanoyldihydrolipoyl]-L-lysyl-[protein] + CO2. Its function is as follows. The branched-chain alpha-keto dehydrogenase complex catalyzes the overall conversion of alpha-keto acids to acyl-CoA and CO(2). It contains multiple copies of three enzymatic components: branched-chain alpha-keto acid decarboxylase (E1), lipoamide acyltransferase (E2) and lipoamide dehydrogenase (E3). Required during sugar starvation and acts under the control of a sugar-sensing mechanism involving Ser/Thr kinases and phosphatases. The sequence is that of 2-oxoisovalerate dehydrogenase subunit beta 2, mitochondrial (DIN4) from Arabidopsis thaliana (Mouse-ear cress).